Here is a 746-residue protein sequence, read N- to C-terminus: Tudor domain-containing protein krimp (746 aa).

Residues 1-310 are involved in homooligomerization; sequence MNLEDISMIM…RDIYNQILKD (310 aa). The segment at 311–489 is non-canonical tudor domain; that stretch reads MAAFPENTIV…PAGITEDDMA (179 aa). The C3H1-type zinc finger occupies 511-540; it reads KDEQRICRHYDPKLNGCFKGNNCRFAHEPF. The 58-residue stretch at 613-670 folds into the Tudor domain; that stretch reads KPRLLDIVLALYSDGCFYRAQIIDEFPSEYMIFYVDYGNTEFVPLSCLAPCENVDSFK.

The protein belongs to the Tudor domain containing protein family. As to quaternary structure, homooligomerizes (via N-terminus). Component of the ping-pong piRNA processing (4P) complex consisting of krimp, aub and AGO3; a single molecule of krimp can bind both aub and AGO3 without the need for homooligomerization. Interacts (via canonical tudor domain) with aub (via N-terminus when symmetrically dimethylated on arginine residues). Interacts (via non-canonical tudor domain) with AGO3 (via N-terminus when unmethylated on arginine residues); this interaction leads to symmetrical dimethylation on AGO3 arginine residues and its subsequent dissociation from krimp. Krimp associated AGO3 is mostly free of piRNA binding and the interaction plays an important role in the loading of AGO3 with piRNAs; piRNA binding stimulates methylation of ACO3 by the csul/PRMT5 methylosome complex and promotes dissociation of the two proteins. As to expression, widely expressed in female germline cells, including differentiating germ cells in germarium and egg chambers (at protein level).

The protein localises to the cytoplasm. Its subcellular location is the perinuclear region. It is found in the cytoplasmic ribonucleoprotein granule. Stable structural component of the perinuclear meiotic nuage, a germline-specific subcellular membraneless ribonucleoprotein compartment involved in production of transposable element-repressing Piwi-interacting RNA (piRNA)-induced silencing complexes (piRISCs), which are essential for maintaining germline integrity during oogenesis. Scaffold component of the ping-pong piRNA processing (4P) complex that recruits the Piwi proteins aub and AGO3 to specific subregions of the nuage where it coordinates their activity in the ping-pong amplification step of secondary piRNA biogenesis. Binds methylated aub, which is associated with piRNA, and unmethylated AGO3, which is not associated with piRNA, bringing the Piwi proteins into close proximity and facilitating the loading of freshly cut piRNAs generated by aub onto AGO3. Promotes asymmetric ping-pong amplification by aub and AGO3 to bias production towards antisense piRNAs capable of silencing transposable elements. Required for symmetrical dimethylation of AGO3, probably by recruitment to the nuage where methylosome components are located; dimethylation promotes AGO3 dissociation and interaction with other tudor-domain containing proteins such as tud. Required for the recruitment of mael to the perinuclear meiotic nuage. Required for the recruitment of aub to the nuage in testes but not in ovaries. Involved in repression of long interspersed nuclear elements (LINEs) including HeT-A, I-element LINEs and possibly mst40, but not TART LINEs. This is Tudor domain-containing protein krimp from Drosophila melanogaster (Fruit fly).